Here is a 551-residue protein sequence, read N- to C-terminus: HTH-type transcriptional regulator SgrR (551 aa).

The HTH marR-type domain occupies 1–116; sequence MPSARLQQQF…LVSHLGRSFR (116 aa). The H-T-H motif DNA-binding region spans 26-49; the sequence is LNELAALLSCSRRHMRTLLNTMQD. The interval 163–492 is solute-binding; that stretch reads ELEADIAHHW…IDWQADAARW (330 aa).

Activates the small RNA gene sgrS under glucose-phosphate stress conditions as well as yfdZ. Represses its own transcription under both stress and non-stress conditions; this repression likely provides one measure of control over sgrR at the level of synthesis. Might act as a sensor of the intracellular accumulation of phosphoglucose by binding these molecules in its C-terminal solute-binding domain. The protein is HTH-type transcriptional regulator SgrR (sgrR) of Escherichia coli (strain K12).